Consider the following 198-residue polypeptide: ATP-dependent Clp protease proteolytic subunit (198 aa).

The active-site Nucleophile is the serine 102. Residue histidine 127 is part of the active site.

It belongs to the peptidase S14 family. Fourteen ClpP subunits assemble into 2 heptameric rings which stack back to back to give a disk-like structure with a central cavity, resembling the structure of eukaryotic proteasomes.

Its subcellular location is the cytoplasm. It catalyses the reaction Hydrolysis of proteins to small peptides in the presence of ATP and magnesium. alpha-casein is the usual test substrate. In the absence of ATP, only oligopeptides shorter than five residues are hydrolyzed (such as succinyl-Leu-Tyr-|-NHMec, and Leu-Tyr-Leu-|-Tyr-Trp, in which cleavage of the -Tyr-|-Leu- and -Tyr-|-Trp bonds also occurs).. Its function is as follows. Cleaves peptides in various proteins in a process that requires ATP hydrolysis. Has a chymotrypsin-like activity. Plays a major role in the degradation of misfolded proteins. In Brachyspira hyodysenteriae (strain ATCC 49526 / WA1), this protein is ATP-dependent Clp protease proteolytic subunit.